The chain runs to 433 residues: Trigger factor (433 aa).

The 86-residue stretch at 163–248 (GDTVNIDFSG…VNEIKFKDVP (86 aa)) folds into the PPIase FKBP-type domain.

It belongs to the FKBP-type PPIase family. Tig subfamily.

It is found in the cytoplasm. It catalyses the reaction [protein]-peptidylproline (omega=180) = [protein]-peptidylproline (omega=0). Its function is as follows. Involved in protein export. Acts as a chaperone by maintaining the newly synthesized protein in an open conformation. Functions as a peptidyl-prolyl cis-trans isomerase. In Staphylococcus epidermidis (strain ATCC 35984 / DSM 28319 / BCRC 17069 / CCUG 31568 / BM 3577 / RP62A), this protein is Trigger factor.